A 260-amino-acid polypeptide reads, in one-letter code: PHD finger protein ALFIN-LIKE 5 (260 aa).

An N-acetylmethionine modification is found at Met1. The interval 142–203 is disordered; that stretch reads AEKQTKEMPS…EEDEDEDEHG (62 aa). Positions 148–165 are enriched in polar residues; it reads EMPSSANQNGNRSKSNSK. A compositionally biased stretch (basic and acidic residues) spans 167–181; that stretch reads RGLESKSSKTIHAKD. Acidic residues predominate over residues 182 to 202; it reads EEEGLELEEGEEEEDEDEDEH. The PHD-type zinc-finger motif lies at 204–256; the sequence is ETLCGACGDNYASDEFWICCDMCEKWFHGECVKITPARAEHIKHYKCPTCSNK.

This sequence belongs to the Alfin family. Interacts with H3K4me3 and to a lesser extent with H3K4me2. As to expression, ubiquitously expressed.

The protein localises to the nucleus. Functionally, histone-binding component that specifically recognizes H3 tails trimethylated on 'Lys-4' (H3K4me3), which mark transcription start sites of virtually all active genes. The sequence is that of PHD finger protein ALFIN-LIKE 5 (AL5) from Arabidopsis thaliana (Mouse-ear cress).